Here is a 512-residue protein sequence, read N- to C-terminus: Flavonoid 3'-monooxygenase (512 aa).

The helical transmembrane segment at 1–21 (MEILSLILYTVIFSFLLQFIL) threads the bilayer. Topologically, residues 22 to 512 (RSFFRKRYPL…PRLEAQAYIG (491 aa)) are cytoplasmic. Residue Cys-447 coordinates heme.

It belongs to the cytochrome P450 family. Requires heme as cofactor. As to expression, high expression in petals and ovaries and to a lower extent in sepals, pedicels, anthers and stems. Not detected in leaves, style or roots.

The protein resides in the endoplasmic reticulum membrane. The enzyme catalyses a 3'-unsubstituted flavone + reduced [NADPH--hemoprotein reductase] + O2 = a 3'-hydroxyflavone + oxidized [NADPH--hemoprotein reductase] + H2O + H(+). It participates in secondary metabolite biosynthesis; flavonoid biosynthesis. In terms of biological role, catalyzes the 3'-hydroxylation of the flavonoid B-ring to the 3',4'-hydroxylated state. Convert naringenin to eriodictyol and dihydrokaempferol to dihydroquercetin. The polypeptide is Flavonoid 3'-monooxygenase (CYP75B2) (Petunia hybrida (Petunia)).